The chain runs to 429 residues: Glutamyl-tRNA reductase (429 aa).

Residues 49 to 52 (TCNR), S107, 112 to 114 (EPQ), and Q118 each bind substrate. The active-site Nucleophile is C50. 187–192 (GAGETI) provides a ligand contact to NADP(+).

The protein belongs to the glutamyl-tRNA reductase family. Homodimer.

It catalyses the reaction (S)-4-amino-5-oxopentanoate + tRNA(Glu) + NADP(+) = L-glutamyl-tRNA(Glu) + NADPH + H(+). Its pathway is porphyrin-containing compound metabolism; protoporphyrin-IX biosynthesis; 5-aminolevulinate from L-glutamyl-tRNA(Glu): step 1/2. Its function is as follows. Catalyzes the NADPH-dependent reduction of glutamyl-tRNA(Glu) to glutamate 1-semialdehyde (GSA). The protein is Glutamyl-tRNA reductase of Pseudomonas fluorescens (strain SBW25).